The primary structure comprises 1613 residues: NAD-specific glutamate dehydrogenase (1613 aa).

Residue K849 is part of the active site.

It belongs to the Glu/Leu/Phe/Val dehydrogenases family.

It catalyses the reaction L-glutamate + NAD(+) + H2O = 2-oxoglutarate + NH4(+) + NADH + H(+). Its function is as follows. Involved in arginine catabolism by converting L-glutamate, into 2-oxoglutarate, which is then channeled into the tricarboxylic acid cycle. The chain is NAD-specific glutamate dehydrogenase from Halomonas elongata (strain ATCC 33173 / DSM 2581 / NBRC 15536 / NCIMB 2198 / 1H9).